The chain runs to 544 residues: Chaperonin GroEL (544 aa).

ATP-binding positions include 30–33, Lys-51, 87–91, Gly-415, and Asp-495; these read TLGP and DGTTT.

It belongs to the chaperonin (HSP60) family. Forms a cylinder of 14 subunits composed of two heptameric rings stacked back-to-back. Interacts with the co-chaperonin GroES.

The protein localises to the cytoplasm. It catalyses the reaction ATP + H2O + a folded polypeptide = ADP + phosphate + an unfolded polypeptide.. Together with its co-chaperonin GroES, plays an essential role in assisting protein folding. The GroEL-GroES system forms a nano-cage that allows encapsulation of the non-native substrate proteins and provides a physical environment optimized to promote and accelerate protein folding. The polypeptide is Chaperonin GroEL (Agrobacterium fabrum (strain C58 / ATCC 33970) (Agrobacterium tumefaciens (strain C58))).